The primary structure comprises 147 residues: Transthyretin (147 aa).

The signal sequence occupies residues 1–20 (MASHRLLLLCLAGLVFVSEA). Cys-30 bears the Sulfocysteine mark. Lys-35 contacts L-thyroxine. Glu-62 carries the post-translational modification 4-carboxyglutamate. Ser-72 is subject to Phosphoserine. Glu-74 contacts L-thyroxine. The N-linked (GlcNAc...) asparagine glycan is linked to Asn-118. Ser-137 provides a ligand contact to L-thyroxine.

Belongs to the transthyretin family. As to quaternary structure, homotetramer. Dimer of dimers. In the homotetramer, subunits assemble around a central channel that can accommodate two ligand molecules. Interacts with RBP4. In terms of processing, sulfonation of the reactive cysteine Cys-30 enhances the stability of the native conformation of TTR, avoiding misassembly of the protein leading to amyloid formation. In terms of tissue distribution, detected in liver.

The protein resides in the secreted. Functionally, thyroid hormone-binding protein. Probably transports thyroxine from the bloodstream to the brain. The polypeptide is Transthyretin (TTR) (Pongo abelii (Sumatran orangutan)).